Reading from the N-terminus, the 396-residue chain is S-adenosylmethionine synthase (396 aa).

H16 serves as a coordination point for ATP. Residue D18 coordinates Mg(2+). Residue E44 coordinates K(+). Residues E57 and Q100 each coordinate L-methionine. Positions 100 to 110 (QSPDINQGVDR) are flexible loop. ATP-binding positions include 165 to 167 (DAK), D240, 246 to 247 (RK), A263, and K267. D240 contacts L-methionine. L-methionine is bound at residue K271.

This sequence belongs to the AdoMet synthase family. Homotetramer; dimer of dimers. Mg(2+) serves as cofactor. K(+) is required as a cofactor.

The protein localises to the cytoplasm. The catalysed reaction is L-methionine + ATP + H2O = S-adenosyl-L-methionine + phosphate + diphosphate. It functions in the pathway amino-acid biosynthesis; S-adenosyl-L-methionine biosynthesis; S-adenosyl-L-methionine from L-methionine: step 1/1. In terms of biological role, catalyzes the formation of S-adenosylmethionine (AdoMet) from methionine and ATP. The overall synthetic reaction is composed of two sequential steps, AdoMet formation and the subsequent tripolyphosphate hydrolysis which occurs prior to release of AdoMet from the enzyme. The protein is S-adenosylmethionine synthase of Pseudomonas fluorescens (strain Pf0-1).